Consider the following 234-residue polypeptide: Large ribosomal subunit protein uL1 (234 aa).

The protein belongs to the universal ribosomal protein uL1 family. In terms of assembly, part of the 50S ribosomal subunit.

In terms of biological role, binds directly to 23S rRNA. The L1 stalk is quite mobile in the ribosome, and is involved in E site tRNA release. Its function is as follows. Protein L1 is also a translational repressor protein, it controls the translation of the L11 operon by binding to its mRNA. The polypeptide is Large ribosomal subunit protein uL1 (Escherichia coli O127:H6 (strain E2348/69 / EPEC)).